A 112-amino-acid chain; its full sequence is UPF0102 protein CFF8240_0294 (112 aa).

Belongs to the UPF0102 family.

This chain is UPF0102 protein CFF8240_0294, found in Campylobacter fetus subsp. fetus (strain 82-40).